Consider the following 419-residue polypeptide: Putative zinc metalloprotease spr0242 (419 aa).

His18 contributes to the Zn(2+) binding site. Glu19 is an active-site residue. His22 contacts Zn(2+). Transmembrane regions (helical) follow at residues Leu169–Ile191, Ile345–Leu367, and Glu388–Trp410.

This sequence belongs to the peptidase M50B family. Zn(2+) is required as a cofactor.

Its subcellular location is the cell membrane. The sequence is that of Putative zinc metalloprotease spr0242 from Streptococcus pneumoniae (strain ATCC BAA-255 / R6).